Here is a 439-residue protein sequence, read N- to C-terminus: General transcription factor IIE subunit 1 (439 aa).

N-acetylalanine is present on Ala2. The region spanning 14–104 (LKRLAKYVIR…NYRTLVNVVK (91 aa)) is the HTH TFE/IIEalpha-type domain. Position 67 is an N6-acetyllysine (Lys67). Residues Cys129, Cys132, Cys154, and Cys157 each contribute to the Zn(2+) site. Residues 129-157 (CPVCSSTFTDLEANQLFDPMTGTFRCTFC) form a C4-type zinc finger. Phosphoserine is present on Ser268. Positions 333–344 (SSAMAGSVGAAA) are enriched in low complexity. The tract at residues 333 to 392 (SSAMAGSVGAAAPVTTANGSDSESETSESDDDSPPRPAAVAVHKREEDEEEDDEFEEVAD) is disordered. Composition is skewed to acidic residues over residues 354–364 (SESETSESDDD) and 379–392 (EDEE…EVAD).

This sequence belongs to the TFIIE alpha subunit family. Tetramer of two alpha and two beta chains. Interacts with TAF6/TAFII80. Interacts with ATF7IP. Interacts with SND1. Part of TBP-based Pol II pre-initiation complex (PIC), in which Pol II core assembles with general transcription factors and other specific initiation factors including GTF2E1, GTF2E2, GTF2F1, GTF2F2, TCEA1, ERCC2, ERCC3, GTF2H2, GTF2H3, GTF2H4, GTF2H5, GTF2A1, GTF2A2, GTF2B and TBP; this large multi-subunit PIC complex mediates DNA unwinding and targets Pol II core to the transcription start site where the first phosphodiester bond forms.

The protein resides in the nucleus. Recruits TFIIH to the initiation complex and stimulates the RNA polymerase II C-terminal domain kinase and DNA-dependent ATPase activities of TFIIH. Both TFIIH and TFIIE are required for promoter clearance by RNA polymerase. This Pongo abelii (Sumatran orangutan) protein is General transcription factor IIE subunit 1 (GTF2E1).